The primary structure comprises 551 residues: MDIKKLSSLAHCAKTRSIVSLFDQKERANDFSLSTSHLYLDYSKQNITDVELEQLIEIAEDVGLSESITGQFNGDKINNTEGRSVLHTILRAPQVIKQQILGDTLANEVEAAELQMAKVVNDVQKGILTSHTGQRFTDVLAIGIGGSYYGVKVSLSALEHYRDLALSVHVIANVDGGALEEKLKTLNFETTLVVVISKTFTTQETMLNAKAVKQWMLSCASVKDLELNNVPLIIEKQWFAVSSNIEAAKEFGINIKHILPMWDWVGGRFSIWSTVGLPLALAIGNDNFNKLKQGAYEMDVHFKSTDFKNNMPVIMALLGIWNRNALEYPTLAILPYAHSLRALPGYLQQTDMESNGKSVSKSGDKLSWLTAPVVFGQEGTNGQHAFMQLMHQSDDIIPTDFIVALKGRSQYTENHKVLVANCFAQSEALMQGKTLTQVESELEMSALSTAEISLIAPHKTMKGNTPSNTLVMDLLTPETIGSLLALYEHKIFVQGVLWQVNSFDQWGVELGKQLGTRILSAIDGAEDDLLSASSQSLIARFRARSNVTPSV.

The Proton donor role is filled by glutamate 353. Active-site residues include histidine 384 and lysine 512.

Belongs to the GPI family.

It localises to the cytoplasm. The enzyme catalyses alpha-D-glucose 6-phosphate = beta-D-fructose 6-phosphate. It functions in the pathway carbohydrate biosynthesis; gluconeogenesis. Its pathway is carbohydrate degradation; glycolysis; D-glyceraldehyde 3-phosphate and glycerone phosphate from D-glucose: step 2/4. Catalyzes the reversible isomerization of glucose-6-phosphate to fructose-6-phosphate. This is Glucose-6-phosphate isomerase 2 from Colwellia psychrerythraea (strain 34H / ATCC BAA-681) (Vibrio psychroerythus).